A 254-amino-acid polypeptide reads, in one-letter code: MAIANKNIIFVAGLGGIGLDTSREIVKSGPKNLVILDRIDNPTAIAELKAINPKVTVTFYPYDVTVPVAETTKLLKTIFAQLKTVDLLINGAGILDDHQIERTIAVNFTGTVNTTTAIMEFWDKRKGGPGGVVANICSVTGFNAIYQVPVYSASKAAALSFTNSLARLAPITGVTAYSINPGITRTPLVHKFNSWLDVEPRVGELLLEHPTQTTLECAQNFVKAIEANKNGAIWQLDLGQLIAVEWTKHWDSHI.

10–33 (FVAGLGGIGLDTSREIVKSGPKNL) contacts NAD(+). Position 138 (serine 138) interacts with substrate. Tyrosine 151 (proton acceptor) is an active-site residue.

It belongs to the short-chain dehydrogenases/reductases (SDR) family. Homodimer.

It catalyses the reaction a primary alcohol + NAD(+) = an aldehyde + NADH + H(+). It carries out the reaction a secondary alcohol + NAD(+) = a ketone + NADH + H(+). This is Alcohol dehydrogenase (Adh1) from Drosophila lacicola (Fruit fly).